Reading from the N-terminus, the 289-residue chain is ATP synthase subunit a (289 aa).

6 consecutive transmembrane segments (helical) span residues 43-63, 104-124, 160-180, 193-213, 232-252, and 259-279; these read AFHV…LFIF, IAPL…IDLV, ISVF…GGFL, IVVQ…TLIA, IFIL…ALGV, and AVFH…LTIV.

It belongs to the ATPase A chain family. In terms of assembly, F-type ATPases have 2 components, CF(1) - the catalytic core - and CF(0) - the membrane proton channel. CF(1) has five subunits: alpha(3), beta(3), gamma(1), delta(1), epsilon(1). CF(0) has three main subunits: a(1), b(2) and c(9-12). The alpha and beta chains form an alternating ring which encloses part of the gamma chain. CF(1) is attached to CF(0) by a central stalk formed by the gamma and epsilon chains, while a peripheral stalk is formed by the delta and b chains.

The protein localises to the cell inner membrane. Functionally, key component of the proton channel; it plays a direct role in the translocation of protons across the membrane. The chain is ATP synthase subunit a from Pseudomonas paraeruginosa (strain DSM 24068 / PA7) (Pseudomonas aeruginosa (strain PA7)).